A 129-amino-acid polypeptide reads, in one-letter code: Small ribosomal subunit protein uS11 (129 aa).

It belongs to the universal ribosomal protein uS11 family. As to quaternary structure, part of the 30S ribosomal subunit. Interacts with proteins S7 and S18. Binds to IF-3.

Its function is as follows. Located on the platform of the 30S subunit, it bridges several disparate RNA helices of the 16S rRNA. Forms part of the Shine-Dalgarno cleft in the 70S ribosome. This Pasteurella multocida (strain Pm70) protein is Small ribosomal subunit protein uS11.